Reading from the N-terminus, the 115-residue chain is MSGEPTDEDLEELRKKKMEQLKEQGGEGQSEAAEAQRQQAEAQKKAILRKTLTDGARKRLNTVQMSKPQFGEKVEQQIVALAQSGRIQGKIDEEKMKELLQEMKPDSQSFDIKRR.

Positions 1-11 (MSGEPTDEDLE) are enriched in acidic residues. Positions 1–46 (MSGEPTDEDLEELRKKKMEQLKEQGGEGQSEAAEAQRQQAEAQKKA) are disordered. The segment covering 12–25 (ELRKKKMEQLKEQG) has biased composition (basic and acidic residues). Over residues 29–41 (QSEAAEAQRQQAE) the composition is skewed to low complexity.

The protein belongs to the PDCD5 family.

This chain is DNA-binding protein NP_4416A, found in Natronomonas pharaonis (strain ATCC 35678 / DSM 2160 / CIP 103997 / JCM 8858 / NBRC 14720 / NCIMB 2260 / Gabara) (Halobacterium pharaonis).